A 284-amino-acid polypeptide reads, in one-letter code: Four and a half LIM domains protein 5 (284 aa).

A C4-type zinc finger spans residues 8–32 (CQYCMASLLGKKYVLKDDNPYCVSC). LIM zinc-binding domains follow at residues 39 to 100 (NYCE…ECSS), 101 to 160 (KCFH…KEFA), 161 to 220 (HYCS…LYAK), and 223 to 283 (AACT…VDTD).

In terms of assembly, interacts with CREM (via the third LIM domain). Interacts (via second LIM domain) with SPAG8.

The protein localises to the nucleus. Functionally, may be involved in the regulation of spermatogenesis. Stimulates CREM transcriptional activity in a phosphorylation-independent manner. The protein is Four and a half LIM domains protein 5 (FHL5) of Bos taurus (Bovine).